A 222-amino-acid chain; its full sequence is Phosphoribosylformylglycinamidine synthase subunit PurQ (222 aa).

Residues 2–222 (RTAVIQFPGS…FESLKGALVQ (221 aa)) enclose the Glutamine amidotransferase type-1 domain. Cysteine 87 acts as the Nucleophile in catalysis. Active-site residues include histidine 195 and glutamate 197.

In terms of assembly, part of the FGAM synthase complex composed of 1 PurL, 1 PurQ and 2 PurS subunits.

It is found in the cytoplasm. The enzyme catalyses N(2)-formyl-N(1)-(5-phospho-beta-D-ribosyl)glycinamide + L-glutamine + ATP + H2O = 2-formamido-N(1)-(5-O-phospho-beta-D-ribosyl)acetamidine + L-glutamate + ADP + phosphate + H(+). It carries out the reaction L-glutamine + H2O = L-glutamate + NH4(+). It functions in the pathway purine metabolism; IMP biosynthesis via de novo pathway; 5-amino-1-(5-phospho-D-ribosyl)imidazole from N(2)-formyl-N(1)-(5-phospho-D-ribosyl)glycinamide: step 1/2. Part of the phosphoribosylformylglycinamidine synthase complex involved in the purines biosynthetic pathway. Catalyzes the ATP-dependent conversion of formylglycinamide ribonucleotide (FGAR) and glutamine to yield formylglycinamidine ribonucleotide (FGAM) and glutamate. The FGAM synthase complex is composed of three subunits. PurQ produces an ammonia molecule by converting glutamine to glutamate. PurL transfers the ammonia molecule to FGAR to form FGAM in an ATP-dependent manner. PurS interacts with PurQ and PurL and is thought to assist in the transfer of the ammonia molecule from PurQ to PurL. The sequence is that of Phosphoribosylformylglycinamidine synthase subunit PurQ from Deinococcus geothermalis (strain DSM 11300 / CIP 105573 / AG-3a).